We begin with the raw amino-acid sequence, 257 residues long: Hydroxyacylglutathione hydrolase (257 aa).

Histidine 54, histidine 56, aspartate 58, histidine 59, histidine 113, aspartate 137, and histidine 175 together coordinate Zn(2+).

It belongs to the metallo-beta-lactamase superfamily. Glyoxalase II family. Monomer. Zn(2+) serves as cofactor.

It catalyses the reaction an S-(2-hydroxyacyl)glutathione + H2O = a 2-hydroxy carboxylate + glutathione + H(+). It participates in secondary metabolite metabolism; methylglyoxal degradation; (R)-lactate from methylglyoxal: step 2/2. Its function is as follows. Thiolesterase that catalyzes the hydrolysis of S-D-lactoyl-glutathione to form glutathione and D-lactic acid. The chain is Hydroxyacylglutathione hydrolase from Rippkaea orientalis (strain PCC 8801 / RF-1) (Cyanothece sp. (strain PCC 8801)).